A 134-amino-acid polypeptide reads, in one-letter code: Putative membrane protein insertion efficiency factor (134 aa).

Belongs to the UPF0161 family.

The protein localises to the cell inner membrane. Could be involved in insertion of integral membrane proteins into the membrane. This Rhizobium etli (strain ATCC 51251 / DSM 11541 / JCM 21823 / NBRC 15573 / CFN 42) protein is Putative membrane protein insertion efficiency factor.